The primary structure comprises 547 residues: ATP synthase subunit alpha (547 aa).

172 to 179 (GDRKTGKT) lines the ATP pocket.

Belongs to the ATPase alpha/beta chains family. F-type ATPases have 2 components, CF(1) - the catalytic core - and CF(0) - the membrane proton channel. CF(1) has five subunits: alpha(3), beta(3), gamma(1), delta(1), epsilon(1). CF(0) has three main subunits: a(1), b(2) and c(9-12). The alpha and beta chains form an alternating ring which encloses part of the gamma chain. CF(1) is attached to CF(0) by a central stalk formed by the gamma and epsilon chains, while a peripheral stalk is formed by the delta and b chains.

The protein resides in the cell membrane. It catalyses the reaction ATP + H2O + 4 H(+)(in) = ADP + phosphate + 5 H(+)(out). Its function is as follows. Produces ATP from ADP in the presence of a proton gradient across the membrane. The alpha chain is a regulatory subunit. In Corynebacterium glutamicum (strain R), this protein is ATP synthase subunit alpha.